Consider the following 159-residue polypeptide: Ribonuclease H (159 aa).

The 143-residue stretch at serine 2–glutamine 144 folds into the RNase H type-1 domain. Positions 11, 50, 72, and 136 each coordinate Mg(2+).

It belongs to the RNase H family. In terms of assembly, monomer. The cofactor is Mg(2+).

It is found in the cytoplasm. It catalyses the reaction Endonucleolytic cleavage to 5'-phosphomonoester.. In terms of biological role, endonuclease that specifically degrades the RNA of RNA-DNA hybrids. The polypeptide is Ribonuclease H (Mycolicibacterium smegmatis (strain ATCC 700084 / mc(2)155) (Mycobacterium smegmatis)).